The following is a 169-amino-acid chain: Group 2 truncated hemoglobin 3-2 (169 aa).

H99 contacts heme b.

Belongs to the truncated hemoglobin family. Group II subfamily. Homodimer when ferric.

Functionally, hemoglobin-like protein that exhibits an unusual concentration-independent binding of O(2) and CO. Required for general plant development and during nodulation. May promote shoot organogenesis from root explants. The polypeptide is Group 2 truncated hemoglobin 3-2 (Medicago truncatula (Barrel medic)).